The chain runs to 157 residues: 2-C-methyl-D-erythritol 2,4-cyclodiphosphate synthase (157 aa).

A divalent metal cation contacts are provided by aspartate 8 and histidine 10. Residues 8–10 (DVH) and 34–35 (HS) each bind 4-CDP-2-C-methyl-D-erythritol 2-phosphate. Histidine 42 provides a ligand contact to a divalent metal cation. Residues 56 to 58 (DIG), 61 to 65 (FPDTD), 132 to 135 (TTTE), phenylalanine 139, and arginine 142 each bind 4-CDP-2-C-methyl-D-erythritol 2-phosphate.

The protein belongs to the IspF family. In terms of assembly, homotrimer. Requires a divalent metal cation as cofactor.

It catalyses the reaction 4-CDP-2-C-methyl-D-erythritol 2-phosphate = 2-C-methyl-D-erythritol 2,4-cyclic diphosphate + CMP. It participates in isoprenoid biosynthesis; isopentenyl diphosphate biosynthesis via DXP pathway; isopentenyl diphosphate from 1-deoxy-D-xylulose 5-phosphate: step 4/6. In terms of biological role, involved in the biosynthesis of isopentenyl diphosphate (IPP) and dimethylallyl diphosphate (DMAPP), two major building blocks of isoprenoid compounds. Catalyzes the conversion of 4-diphosphocytidyl-2-C-methyl-D-erythritol 2-phosphate (CDP-ME2P) to 2-C-methyl-D-erythritol 2,4-cyclodiphosphate (ME-CPP) with a corresponding release of cytidine 5-monophosphate (CMP). This chain is 2-C-methyl-D-erythritol 2,4-cyclodiphosphate synthase, found in Pseudomonas putida (strain W619).